The primary structure comprises 309 residues: Protoheme IX farnesyltransferase (309 aa).

9 consecutive transmembrane segments (helical) span residues 30-49 (VMSL…PGGV), 53-75 (IGFT…NMWY), 98-118 (AGEA…MLGL), 123-143 (VAAG…SMWL), 151-171 (IVIG…AVTG), 178-198 (VLMF…LALF), 224-244 (ILIY…TEVA), 247-267 (VYLI…YDIW), and 285-305 (VFKF…LDAI).

It belongs to the UbiA prenyltransferase family. Protoheme IX farnesyltransferase subfamily. As to quaternary structure, interacts with CtaA.

The protein localises to the cell inner membrane. The enzyme catalyses heme b + (2E,6E)-farnesyl diphosphate + H2O = Fe(II)-heme o + diphosphate. The protein operates within porphyrin-containing compound metabolism; heme O biosynthesis; heme O from protoheme: step 1/1. In terms of biological role, converts heme B (protoheme IX) to heme O by substitution of the vinyl group on carbon 2 of heme B porphyrin ring with a hydroxyethyl farnesyl side group. This is Protoheme IX farnesyltransferase from Jannaschia sp. (strain CCS1).